Reading from the N-terminus, the 159-residue chain is Cyclic pyranopterin monophosphate synthase (159 aa).

Substrate-binding positions include Leu75–His77 and Met113–Glu114. Residue Asp128 is part of the active site.

Belongs to the MoaC family. As to quaternary structure, homohexamer; trimer of dimers.

It catalyses the reaction (8S)-3',8-cyclo-7,8-dihydroguanosine 5'-triphosphate = cyclic pyranopterin phosphate + diphosphate. It functions in the pathway cofactor biosynthesis; molybdopterin biosynthesis. Catalyzes the conversion of (8S)-3',8-cyclo-7,8-dihydroguanosine 5'-triphosphate to cyclic pyranopterin monophosphate (cPMP). This is Cyclic pyranopterin monophosphate synthase from Yersinia pseudotuberculosis serotype IB (strain PB1/+).